The chain runs to 483 residues: Aspartyl/glutamyl-tRNA(Asn/Gln) amidotransferase subunit B (483 aa).

It belongs to the GatB/GatE family. GatB subfamily. Heterotrimer of A, B and C subunits.

It catalyses the reaction L-glutamyl-tRNA(Gln) + L-glutamine + ATP + H2O = L-glutaminyl-tRNA(Gln) + L-glutamate + ADP + phosphate + H(+). The enzyme catalyses L-aspartyl-tRNA(Asn) + L-glutamine + ATP + H2O = L-asparaginyl-tRNA(Asn) + L-glutamate + ADP + phosphate + 2 H(+). Its function is as follows. Allows the formation of correctly charged Asn-tRNA(Asn) or Gln-tRNA(Gln) through the transamidation of misacylated Asp-tRNA(Asn) or Glu-tRNA(Gln) in organisms which lack either or both of asparaginyl-tRNA or glutaminyl-tRNA synthetases. The reaction takes place in the presence of glutamine and ATP through an activated phospho-Asp-tRNA(Asn) or phospho-Glu-tRNA(Gln). The chain is Aspartyl/glutamyl-tRNA(Asn/Gln) amidotransferase subunit B from Lachnospira eligens (strain ATCC 27750 / DSM 3376 / VPI C15-48 / C15-B4) (Eubacterium eligens).